A 596-amino-acid chain; its full sequence is Alpha-1,3-galactosidase A (596 aa).

An N-terminal signal peptide occupies residues 1-21; that stretch reads MQNPVASLLFILAMLTGPCPA. A disordered region spans residues 23–57; it reads DYPERTERTQSAGNHVWHIDPDKGNDGNPGTAPST. 4 PbH1 repeats span residues 351–373, 482–504, 515–537, and 547–569; these read RGKI…NVHG, RKPV…LVED, VRNM…QIVP, and HRNI…RIRH.

The protein belongs to the glycosyl hydrolase 110 family. A subfamily.

The catalysed reaction is Hydrolysis of terminal, non-reducing branched (1-&gt;3)-alpha-D-galactosidic residues, producing free D-galactose.. It carries out the reaction Hydrolysis of terminal, non-reducing alpha-D-galactose residues in alpha-D-galactosides, including galactose oligosaccharides, galactomannans and galactolipids.. Its function is as follows. Alpha-galactosidase that specifically removes branched alpha-1,3-linked galactose residues present in blood group B antigens. Has no activity toward linear alpha-1,3-linked galactose residues. This is Alpha-1,3-galactosidase A (glaA) from Akkermansia muciniphila (strain ATCC BAA-835 / DSM 22959 / JCM 33894 / BCRC 81048 / CCUG 64013 / CIP 107961 / Muc).